The following is a 188-amino-acid chain: Elongation factor P (188 aa).

Belongs to the elongation factor P family.

The protein localises to the cytoplasm. It functions in the pathway protein biosynthesis; polypeptide chain elongation. Its function is as follows. Involved in peptide bond synthesis. Stimulates efficient translation and peptide-bond synthesis on native or reconstituted 70S ribosomes in vitro. Probably functions indirectly by altering the affinity of the ribosome for aminoacyl-tRNA, thus increasing their reactivity as acceptors for peptidyl transferase. This is Elongation factor P from Leptospira borgpetersenii serovar Hardjo-bovis (strain JB197).